Here is a 328-residue protein sequence, read N- to C-terminus: 4-hydroxythreonine-4-phosphate dehydrogenase (328 aa).

Residues His-135 and Thr-136 each contribute to the substrate site. Residues His-165, His-210, and His-265 each contribute to the a divalent metal cation site. Lys-273, Asn-282, and Arg-291 together coordinate substrate.

It belongs to the PdxA family. Homodimer. Zn(2+) is required as a cofactor. Mg(2+) serves as cofactor. The cofactor is Co(2+).

Its subcellular location is the cytoplasm. It catalyses the reaction 4-(phosphooxy)-L-threonine + NAD(+) = 3-amino-2-oxopropyl phosphate + CO2 + NADH. It participates in cofactor biosynthesis; pyridoxine 5'-phosphate biosynthesis; pyridoxine 5'-phosphate from D-erythrose 4-phosphate: step 4/5. Its function is as follows. Catalyzes the NAD(P)-dependent oxidation of 4-(phosphooxy)-L-threonine (HTP) into 2-amino-3-oxo-4-(phosphooxy)butyric acid which spontaneously decarboxylates to form 3-amino-2-oxopropyl phosphate (AHAP). The sequence is that of 4-hydroxythreonine-4-phosphate dehydrogenase from Enterobacter sp. (strain 638).